We begin with the raw amino-acid sequence, 497 residues long: MGAIMVVGTTSHAGKSIMAAVICRMLKRKGYQVTPFKGQNMALNAYVTNAGDEIGHAQAVQAWAAGLEPRVEMNPILLKPQGDMTSQVILNGKAVGRTQAADYYRDYFDRGWQAITTALVTLQQEFDWIVCEGAGSPAEINLKHRDLTNMRVAKHLNAPTLLVADIDRGGVFAHIVGTLELLDPDERALIKGFVINKFRGQRSLLESGITWLEERTGIPVVGVIPWLEHSLPAEDSLDLFERRRTKPNAEVTIAVIRLPRISNFTDFDPLEAEPSVRLQFVGPNQPLGQPDAVIVPGSKTTISDLQQLQVSSMADQLRAYSQAGGMVLGICGGLQMLGQTISDPMGTEGPPGEFAGLGLLPLQTTMSGDKITRQRQAQITLPSDCSALGEDARTIQGYEIHQGQTQVLQPEAVQAWFDDPALGVVSCNHRILGTYLHGIFNNGPWRRVWLNQLRAQKNLLPLPLAIPNYKVYRDHMLDQVTDAIAPYLNLQPFLGKA.

Residues 250–445 (EVTIAVIRLP…LHGIFNNGPW (196 aa)) enclose the GATase cobBQ-type domain. The active-site Nucleophile is the Cys-331. His-437 is an active-site residue.

Belongs to the CobB/CobQ family. CobQ subfamily.

It functions in the pathway cofactor biosynthesis; adenosylcobalamin biosynthesis. Its function is as follows. Catalyzes amidations at positions B, D, E, and G on adenosylcobyrinic A,C-diamide. NH(2) groups are provided by glutamine, and one molecule of ATP is hydrogenolyzed for each amidation. The sequence is that of Cobyric acid synthase from Acaryochloris marina (strain MBIC 11017).